The sequence spans 67 residues: Conotoxin mr3d (67 aa).

The first 19 residues, 1–19 (MSKLGILLTICLLLFPLTA), serve as a signal peptide directing secretion. The propeptide occupies 20-52 (VPLDGDQPADRPAERMQDDISSEHHPFFDPVKR). Cystine bridges form between Cys-53–Cys-65, Cys-54–Cys-62, and Cys-58–Cys-66. The residue at position 64 (Pro-64) is a 4-hydroxyproline; partial. Cys-66 is modified (cysteine amide; partial).

Belongs to the conotoxin M superfamily. Post-translationally, has been found to be hydroxylated and amidated by Han et al. (2006), and to be unmodified by Ju et al. (2022). As to expression, expressed by the venom duct.

It is found in the secreted. This is Conotoxin mr3d from Conus marmoreus (Marble cone).